A 66-amino-acid chain; its full sequence is Large ribosomal subunit protein bL33 (66 aa).

It belongs to the bacterial ribosomal protein bL33 family.

The sequence is that of Large ribosomal subunit protein bL33 from Synechococcus sp. (strain CC9311).